A 99-amino-acid chain; its full sequence is Class II hydrophobin B (99 aa).

Positions 1 to 15 (MKFFAIAALFAGALA) are cleaved as a signal peptide. 2 cysteine pairs are disulfide-bonded: Cys-30/Cys-79 and Cys-40/Cys-70.

The protein belongs to the cerato-ulmin hydrophobin family.

It localises to the secreted. Its subcellular location is the cell wall. The protein resides in the vacuole. The protein localises to the cytoplasmic vesicle. Functionally, aerial growth, conidiation, and dispersal of filamentous fungi in the environment rely upon a capability of their secreting small amphipathic proteins called hydrophobins (HPBs) with low sequence identity. Class I can self-assemble into an outermost layer of rodlet bundles on aerial cell surfaces, conferring cellular hydrophobicity that supports fungal growth, development and dispersal; whereas Class II form highly ordered films at water-air interfaces through intermolecular interactions but contribute nothing to the rodlet structure. Hyd2B contributes to certain cell wall-related features, such as hydrophobicity but is not involved in cell wall-related events during fungal proliferation in host hemocoel. Does not contribute to conidial hydrophobicity. Involved in insect hemocoel colonization independent of cell hydrophobicity. The sequence is that of Class II hydrophobin B from Beauveria bassiana (strain ARSEF 2860) (White muscardine disease fungus).